Here is a 479-residue protein sequence, read N- to C-terminus: ATP synthase subunit beta (479 aa).

153–160 is an ATP binding site; sequence GGAGVGKT.

Belongs to the ATPase alpha/beta chains family. F-type ATPases have 2 components, CF(1) - the catalytic core - and CF(0) - the membrane proton channel. CF(1) has five subunits: alpha(3), beta(3), gamma(1), delta(1), epsilon(1). CF(0) has three main subunits: a(1), b(2) and c(9-12). The alpha and beta chains form an alternating ring which encloses part of the gamma chain. CF(1) is attached to CF(0) by a central stalk formed by the gamma and epsilon chains, while a peripheral stalk is formed by the delta and b chains.

It is found in the cell membrane. The enzyme catalyses ATP + H2O + 4 H(+)(in) = ADP + phosphate + 5 H(+)(out). Produces ATP from ADP in the presence of a proton gradient across the membrane. The catalytic sites are hosted primarily by the beta subunits. In Lactobacillus delbrueckii subsp. bulgaricus (strain ATCC BAA-365 / Lb-18), this protein is ATP synthase subunit beta.